Reading from the N-terminus, the 860-residue chain is Late endosome and vacuole interface protein 11 (860 aa).

The disordered stretch occupies residues 19–45 (EIINNSDHSSSHSTSHEEEDEEEDDTE). Over residues 20-31 (IINNSDHSSSHS) the composition is skewed to low complexity. The span at 35-45 (EEEDEEEDDTE) shows a compositional bias: acidic residues. The BED-type zinc finger occupies 84–138 (KNIAKFWSHFLAIEKKLTKVKCKHCGEILTRSDASLTKTFRSHLKTKHNISANKN). Zn(2+) contacts are provided by cysteine 105, cysteine 108, histidine 126, and histidine 131.

Belongs to the VID22 family.

The protein resides in the nucleus. In terms of biological role, involved in vacuolar processing and morphology. This chain is Late endosome and vacuole interface protein 11 (ENV11), found in Saccharomyces cerevisiae (strain ATCC 204508 / S288c) (Baker's yeast).